The sequence spans 272 residues: ATP synthase subunit delta (272 aa).

Belongs to the ATPase delta chain family. As to quaternary structure, F-type ATPases have 2 components, F(1) - the catalytic core - and F(0) - the membrane proton channel. F(1) has five subunits: alpha(3), beta(3), gamma(1), delta(1), epsilon(1). F(0) has three main subunits: a(1), b(2) and c(10-14). The alpha and beta chains form an alternating ring which encloses part of the gamma chain. F(1) is attached to F(0) by a central stalk formed by the gamma and epsilon chains, while a peripheral stalk is formed by the delta and b chains.

The protein localises to the cell membrane. Functionally, f(1)F(0) ATP synthase produces ATP from ADP in the presence of a proton or sodium gradient. F-type ATPases consist of two structural domains, F(1) containing the extramembraneous catalytic core and F(0) containing the membrane proton channel, linked together by a central stalk and a peripheral stalk. During catalysis, ATP synthesis in the catalytic domain of F(1) is coupled via a rotary mechanism of the central stalk subunits to proton translocation. This protein is part of the stalk that links CF(0) to CF(1). It either transmits conformational changes from CF(0) to CF(1) or is implicated in proton conduction. In Corynebacterium urealyticum (strain ATCC 43042 / DSM 7109), this protein is ATP synthase subunit delta.